Here is a 445-residue protein sequence, read N- to C-terminus: Phosphoglucosamine mutase (445 aa).

Residue Ser102 is the Phosphoserine intermediate of the active site. Ser102, Asp241, Asp243, and Asp245 together coordinate Mg(2+). The residue at position 102 (Ser102) is a Phosphoserine.

It belongs to the phosphohexose mutase family. The cofactor is Mg(2+). Post-translationally, activated by phosphorylation.

It carries out the reaction alpha-D-glucosamine 1-phosphate = D-glucosamine 6-phosphate. Functionally, catalyzes the conversion of glucosamine-6-phosphate to glucosamine-1-phosphate. The polypeptide is Phosphoglucosamine mutase (Shewanella sp. (strain ANA-3)).